Reading from the N-terminus, the 681-residue chain is LLNKDVLSSTLASILALHKWGLGQHHIAKGLHFLELNFASATDNSQITPLGFDIVFPAMLDHAADLSLNLRLDPTTLNDLMNRRDLELQRCTENGSAETEVYMAYIGEGMGKLHDWESVMKYQRKNGSLFNSPSTTAAAFIALRNSDCLNYLYSALNKFGSAVPAVYPLDIYSQLCIVDNLERLGISRFFSTEIQSVLDETYRCWLQGDEEIFMDASTCGLAFRTLRMNGYNVTSDPITKILQECFSSSFRGNMTDINTTLEIYRASELILYPEERDLDQHNLRLKTFLEQELSSNGFIQSCQLGRNINAEVNQAIEYPFYAIMDRMAKRKNIENYNIDNTRILKTSYRSPNFGNKDFLSLSVEDFNRCQVIHREELRELERWVIENRLDELKFARSKAAYCYFSAAATIFSPELSDARMSWAKNALMTTMVDDLFDVTGSVEEMKNLIQLVELWDVDVSTECCSHKVQILFSALKRTICEVGDRAYQLQGRSIRSHIIVIWLDTLHSMMKEVEWTRDKFVPTMDEYVSNAYVSFALGPIVLPALYLVGPKLSEEMVNHSEYHNLFKLMSTCGRLMNDIRGYEREHDDGKLNAMSLYIMNNGGEITPEVAILEIKSWNDRQRRDLLSLVLEEKSVIPKACKDLFWHMCSVVHLFYNKDDGFWSQELIEVVNQVIHQPILLN.

D433, D437, N577, and E585 together coordinate Mg(2+). The DDXXD motif signature appears at 433–437; the sequence is DDLFD.

The protein belongs to the terpene synthase family. Mg(2+) serves as cofactor. In terms of tissue distribution, expressed in leaves.

It is found in the plastid. It localises to the chloroplast. Its pathway is secondary metabolite biosynthesis; terpenoid biosynthesis. May be involved in the biosynthesis of ent-kaurene diterpenoids natural products such as oridonin, miltiradiene, eriocalyxin B and nezukol, known to exhibit antitumor, anti-inflammatory and antibacterial activities. The polypeptide is Terpene synthase 6, chloroplastic (Isodon rubescens (Rabdosia rubescens)).